A 311-amino-acid chain; its full sequence is HPr kinase/phosphorylase (311 aa).

Residues His138 and Lys159 contribute to the active site. 153–160 (GDSGIGKS) contributes to the ATP binding site. Ser160 serves as a coordination point for Mg(2+). Asp177 acts as the Proton acceptor; for phosphorylation activity. Proton donor; for dephosphorylation activity in catalysis. Residues 201-210 (LEIRGVGIID) are important for the catalytic mechanism of both phosphorylation and dephosphorylation. Glu202 provides a ligand contact to Mg(2+). The active site involves Arg243. Residues 264-269 (PVKTGR) form an important for the catalytic mechanism of dephosphorylation region.

Belongs to the HPrK/P family. In terms of assembly, homohexamer. The cofactor is Mg(2+).

It catalyses the reaction [HPr protein]-L-serine + ATP = [HPr protein]-O-phospho-L-serine + ADP + H(+). The catalysed reaction is [HPr protein]-O-phospho-L-serine + phosphate + H(+) = [HPr protein]-L-serine + diphosphate. In terms of biological role, catalyzes the ATP- as well as the pyrophosphate-dependent phosphorylation of a specific serine residue in HPr, a phosphocarrier protein of the phosphoenolpyruvate-dependent sugar phosphotransferase system (PTS). HprK/P also catalyzes the pyrophosphate-producing, inorganic phosphate-dependent dephosphorylation (phosphorolysis) of seryl-phosphorylated HPr (P-Ser-HPr). The two antagonistic activities of HprK/P are regulated by several intracellular metabolites, which change their concentration in response to the absence or presence of rapidly metabolisable carbon sources (glucose, fructose, etc.) in the growth medium. Therefore, by controlling the phosphorylation state of HPr, HPrK/P is a sensor enzyme that plays a major role in the regulation of carbon metabolism and sugar transport: it mediates carbon catabolite repression (CCR), and regulates PTS-catalyzed carbohydrate uptake and inducer exclusion. In Streptococcus gordonii (strain Challis / ATCC 35105 / BCRC 15272 / CH1 / DL1 / V288), this protein is HPr kinase/phosphorylase.